The following is a 334-amino-acid chain: Probable tRNA pseudouridine synthase B (334 aa).

D82 acts as the Nucleophile in catalysis. Residues 250–325 (LPKIWIKDSA…IAVDVEKVFM (76 aa)) enclose the PUA domain.

This sequence belongs to the pseudouridine synthase TruB family. Type 2 subfamily.

It catalyses the reaction uridine(55) in tRNA = pseudouridine(55) in tRNA. Functionally, could be responsible for synthesis of pseudouridine from uracil-55 in the psi GC loop of transfer RNAs. This chain is Probable tRNA pseudouridine synthase B, found in Pyrococcus horikoshii (strain ATCC 700860 / DSM 12428 / JCM 9974 / NBRC 100139 / OT-3).